Reading from the N-terminus, the 363-residue chain is Probable aminomethyltransferase (363 aa).

Belongs to the GcvT family. In terms of assembly, the glycine cleavage system is composed of four proteins: P, T, L and H.

It carries out the reaction N(6)-[(R)-S(8)-aminomethyldihydrolipoyl]-L-lysyl-[protein] + (6S)-5,6,7,8-tetrahydrofolate = N(6)-[(R)-dihydrolipoyl]-L-lysyl-[protein] + (6R)-5,10-methylene-5,6,7,8-tetrahydrofolate + NH4(+). Its function is as follows. The glycine cleavage system catalyzes the degradation of glycine. The polypeptide is Probable aminomethyltransferase (Halobacterium salinarum (strain ATCC 29341 / DSM 671 / R1)).